Here is a 25-residue protein sequence, read N- to C-terminus: Granule-bound starch synthase 1, chloroplastic/amyloplastic (25 aa).

K16 provides a ligand contact to ADP-alpha-D-glucose.

This sequence belongs to the glycosyltransferase 1 family. Bacterial/plant glycogen synthase subfamily. In terms of tissue distribution, expressed in endosperm.

The protein localises to the plastid. Its subcellular location is the chloroplast. The protein resides in the amyloplast. The catalysed reaction is an NDP-alpha-D-glucose + [(1-&gt;4)-alpha-D-glucosyl](n) = [(1-&gt;4)-alpha-D-glucosyl](n+1) + a ribonucleoside 5'-diphosphate + H(+). It functions in the pathway glycan biosynthesis; starch biosynthesis. Its function is as follows. Required for the synthesis of amylose in endosperm. This is Granule-bound starch synthase 1, chloroplastic/amyloplastic from Fagopyrum esculentum (Common buckwheat).